Here is a 545-residue protein sequence, read N- to C-terminus: CTP synthase (545 aa).

The amidoligase domain stretch occupies residues M1–L265. S13 provides a ligand contact to CTP. A UTP-binding site is contributed by S13. S14–I19 contributes to the ATP binding site. Residue Y54 coordinates L-glutamine. Position 71 (D71) interacts with ATP. The Mg(2+) site is built by D71 and E139. CTP contacts are provided by residues D146–E148, K186–Q191, and K222. Residues K186 to Q191 and K222 contribute to the UTP site. In terms of domain architecture, Glutamine amidotransferase type-1 spans T290 to A541. G351 is an L-glutamine binding site. The active-site Nucleophile; for glutamine hydrolysis is C378. L-glutamine is bound by residues L379–Q382, E402, and R469. Catalysis depends on residues H514 and E516.

It belongs to the CTP synthase family. As to quaternary structure, homotetramer.

It carries out the reaction UTP + L-glutamine + ATP + H2O = CTP + L-glutamate + ADP + phosphate + 2 H(+). It catalyses the reaction L-glutamine + H2O = L-glutamate + NH4(+). The enzyme catalyses UTP + NH4(+) + ATP = CTP + ADP + phosphate + 2 H(+). It participates in pyrimidine metabolism; CTP biosynthesis via de novo pathway; CTP from UDP: step 2/2. Its activity is regulated as follows. Allosterically activated by GTP, when glutamine is the substrate; GTP has no effect on the reaction when ammonia is the substrate. The allosteric effector GTP functions by stabilizing the protein conformation that binds the tetrahedral intermediate(s) formed during glutamine hydrolysis. Inhibited by the product CTP, via allosteric rather than competitive inhibition. In terms of biological role, catalyzes the ATP-dependent amination of UTP to CTP with either L-glutamine or ammonia as the source of nitrogen. Regulates intracellular CTP levels through interactions with the four ribonucleotide triphosphates. This is CTP synthase from Alcanivorax borkumensis (strain ATCC 700651 / DSM 11573 / NCIMB 13689 / SK2).